A 110-amino-acid chain; its full sequence is Large ribosomal subunit protein P2 (110 aa).

The segment at alanine 63–aspartate 110 is disordered. Positions alanine 86–glutamate 95 are enriched in basic and acidic residues.

The protein belongs to the eukaryotic ribosomal protein P1/P2 family. In terms of assembly, P1 and P2 exist as dimers at the large ribosomal subunit. Phosphorylated.

Its function is as follows. Plays an important role in the elongation step of protein synthesis. This chain is Large ribosomal subunit protein P2, found in Cryptochiton stelleri (Giant gumboot chiton).